The following is a 358-amino-acid chain: Protein RecA (358 aa).

69–76 (GPESSGKT) is a binding site for ATP.

This sequence belongs to the RecA family.

It is found in the cytoplasm. Can catalyze the hydrolysis of ATP in the presence of single-stranded DNA, the ATP-dependent uptake of single-stranded DNA by duplex DNA, and the ATP-dependent hybridization of homologous single-stranded DNAs. It interacts with LexA causing its activation and leading to its autocatalytic cleavage. In Trichormus variabilis (strain ATCC 29413 / PCC 7937) (Anabaena variabilis), this protein is Protein RecA.